A 254-amino-acid chain; its full sequence is Protein GltF (254 aa).

Positions 1–25 (MFFKKNLTTAAICAALSVAAFSAMA) are cleaved as a signal peptide. The helical transmembrane segment at 213–229 (PVAITAVTFPLLIDAAV) threads the bilayer.

It to E.coli YhcF.

It is found in the cell membrane. Its function is as follows. Involved in induction of the so-called NTR enzymes in response to nitrogen deprivation, as well as in glutamate biosynthesis. May mediate the glutamate-dependent repression of the GLT operon. In Escherichia coli (strain K12), this protein is Protein GltF (gltF).